We begin with the raw amino-acid sequence, 326 residues long: Phospho-N-acetylmuramoyl-pentapeptide-transferase (326 aa).

10 helical membrane-spanning segments follow: residues isoleucine 4–proline 24, threonine 49–isoleucine 69, glycine 74–isoleucine 94, lysine 109–glycine 129, leucine 151–valine 171, glycine 179–alanine 199, glycine 203–phenylalanine 223, valine 228–valine 248, leucine 254–isoleucine 274, and valine 303–tyrosine 323.

Belongs to the glycosyltransferase 4 family. MraY subfamily. The cofactor is Mg(2+).

It is found in the cell membrane. It catalyses the reaction UDP-N-acetyl-alpha-D-muramoyl-L-alanyl-gamma-D-glutamyl-meso-2,6-diaminopimeloyl-D-alanyl-D-alanine + di-trans,octa-cis-undecaprenyl phosphate = di-trans,octa-cis-undecaprenyl diphospho-N-acetyl-alpha-D-muramoyl-L-alanyl-D-glutamyl-meso-2,6-diaminopimeloyl-D-alanyl-D-alanine + UMP. It functions in the pathway cell wall biogenesis; peptidoglycan biosynthesis. Its function is as follows. Catalyzes the initial step of the lipid cycle reactions in the biosynthesis of the cell wall peptidoglycan: transfers peptidoglycan precursor phospho-MurNAc-pentapeptide from UDP-MurNAc-pentapeptide onto the lipid carrier undecaprenyl phosphate, yielding undecaprenyl-pyrophosphoryl-MurNAc-pentapeptide, known as lipid I. This chain is Phospho-N-acetylmuramoyl-pentapeptide-transferase, found in Pelotomaculum thermopropionicum (strain DSM 13744 / JCM 10971 / SI).